Here is a 778-residue protein sequence, read N- to C-terminus: Mitochondrial intermediate peptidase (778 aa).

The transit peptide at 1-37 (MIRTVTRPRQWQRWVYSSCLLQRAVPPAAARQQPRFT) directs the protein to the mitochondrion. His-557 contributes to the Zn(2+) binding site. Glu-558 is an active-site residue. Zn(2+)-binding residues include His-561 and His-564.

It belongs to the peptidase M3 family. The cofactor is Zn(2+).

The protein resides in the mitochondrion matrix. It catalyses the reaction Release of an N-terminal octapeptide as second stage of processing of some proteins imported into the mitochondrion.. In terms of biological role, cleaves proteins, imported into the mitochondrion, to their mature size. While most mitochondrial precursor proteins are processed to the mature form in one step by mitochondrial processing peptidase (MPP), the sequential cleavage by MIP of an octapeptide after initial processing by MPP is a required step for a subgroup of nuclear-encoded precursor proteins destined for the matrix or the inner membrane. The chain is Mitochondrial intermediate peptidase (OCT1) from Chaetomium globosum (strain ATCC 6205 / CBS 148.51 / DSM 1962 / NBRC 6347 / NRRL 1970) (Soil fungus).